The primary structure comprises 388 residues: MNLHEYQAKQIFAQYRLPVSKGIVCHSLDDAVSAIHTLAGDTWAAKCQVHAGGRGKAGGVKLVRSEAEIREFCHQWLGQRLVTFQTDKNGQLVNTIYLEETCLIERELYLGAVIDRSSQKIVFMASNAGGMNIEDVAAQTPELIHKATIDPLTGAQAFQGRELAFKLGLSGDQIKQFAHLFVQLAKLFIEKDLALLEVNPLVLTKQGQLLCLDAKMVIDSNALYRHPELKALQDPSQEDAREADAAKWDLNYVALDGNIGCMVNGAGLAMGTMDIVKLHGGRPANFLDVGGGATKERVSEAFKLILSDQNVKAVLVNIFGGIVRCDLIAEGIIAAVNEVGINIPVIVRLEGTNAELGREILANSGLRLIAANTLTQAAQLAVKAAEGK.

ATP contacts are provided by residues lysine 46, 53 to 55 (GRG), glutamate 99, cysteine 102, and glutamate 107. The Mg(2+) site is built by asparagine 199 and aspartate 213. Substrate is bound by residues asparagine 264 and 321–323 (GIV).

Belongs to the succinate/malate CoA ligase beta subunit family. In terms of assembly, heterotetramer of two alpha and two beta subunits. Requires Mg(2+) as cofactor.

The enzyme catalyses succinate + ATP + CoA = succinyl-CoA + ADP + phosphate. It carries out the reaction GTP + succinate + CoA = succinyl-CoA + GDP + phosphate. The protein operates within carbohydrate metabolism; tricarboxylic acid cycle; succinate from succinyl-CoA (ligase route): step 1/1. Succinyl-CoA synthetase functions in the citric acid cycle (TCA), coupling the hydrolysis of succinyl-CoA to the synthesis of either ATP or GTP and thus represents the only step of substrate-level phosphorylation in the TCA. The beta subunit provides nucleotide specificity of the enzyme and binds the substrate succinate, while the binding sites for coenzyme A and phosphate are found in the alpha subunit. This chain is Succinate--CoA ligase [ADP-forming] subunit beta, found in Actinobacillus pleuropneumoniae serotype 3 (strain JL03).